Here is a 368-residue protein sequence, read N- to C-terminus: Probable endopolygalacturonase A (368 aa).

The signal sequence occupies residues 1 to 18; that stretch reads MRSVKLFGLAALGSLGAA. A propeptide spanning residues 19 to 31 is cleaved from the precursor; sequence APAPSRVSDLTKR. An intrachain disulfide couples C35 to C50. PbH1 repeat units lie at residues 140-162, 167-192, 193-214, 215-235, 244-265, 273-295, and 307-352; these read LEDS…SVQA, LIDI…DISE, STGV…AINS, GENI…SIGS, VKNV…RIKT, VSQV…VIEQ, and TTGV…DITG. The active-site Proton donor is D207. A disulfide bridge connects residues C209 and C225. H229 is a catalytic residue. N-linked (GlcNAc...) asparagine glycosylation occurs at N246. 2 disulfide bridges follow: C335–C340 and C359–C368.

This sequence belongs to the glycosyl hydrolase 28 family.

It localises to the secreted. It carries out the reaction (1,4-alpha-D-galacturonosyl)n+m + H2O = (1,4-alpha-D-galacturonosyl)n + (1,4-alpha-D-galacturonosyl)m.. In terms of biological role, involved in maceration and soft-rotting of plant tissue. Hydrolyzes the 1,4-alpha glycosidic bonds of de-esterified pectate in the smooth region of the plant cell wall. In Aspergillus fumigatus (strain CBS 144.89 / FGSC A1163 / CEA10) (Neosartorya fumigata), this protein is Probable endopolygalacturonase A (pgaA).